An 891-amino-acid chain; its full sequence is DNA mismatch repair protein MutS (891 aa).

ATP is bound at residue 617-624 (GPNMSGKS). Over residues 805-827 (REKIEEEEPKTKDTKRGPSEKVK) the composition is skewed to basic and acidic residues. A disordered region spans residues 805–840 (REKIEEEEPKTKDTKRGPSEKVKNASPTLPRDEKGR).

The protein belongs to the DNA mismatch repair MutS family.

Functionally, this protein is involved in the repair of mismatches in DNA. It is possible that it carries out the mismatch recognition step. This protein has a weak ATPase activity. The protein is DNA mismatch repair protein MutS of Porphyromonas gingivalis (strain ATCC BAA-308 / W83).